Here is a 350-residue protein sequence, read N- to C-terminus: MAVLVVLLFFLVAGALGNEFSILRSPGSVVFRNGNWPIPGDRIPDVAALSMGFSVKEDLSWPGLAVGNLFHRPRATIMVMVKGVDKLALPAGSVISYPLENAVPFSLDSVANSIHSLFSEETPVVLQLAPSEERVYMVGKANSVFEDLSVTLRQLRNRLFQENSLLNSLPLNSLSRNNEVDLLFLSELQVLHDISSLLSRHKHLAKDHSPDLYSLELAGLDELGKRYGEDSEQFRDASKILVDALQKFADDMYSLYGGNAVVELVTVKSFDTSLVRKSRTILEAKQENTQSPYNLAYKYNLEYSVVFNLVLWIMIGLALAVIITSYNIWNMDPGYDSIIYRMTNQKIRID.

The N-terminal stretch at 1 to 17 (MAVLVVLLFFLVAGALG) is a signal peptide. At 18–302 (NEFSILRSPG…YNLAYKYNLE (285 aa)) the chain is on the extracellular side. The helical transmembrane segment at 303–323 (YSVVFNLVLWIMIGLALAVII) threads the bilayer. Over 324 to 350 (TSYNIWNMDPGYDSIIYRMTNQKIRID) the chain is Cytoplasmic. The Mediates retrograde transport to the ER signature appears at 346–350 (KIRID).

Interacts with renin. Accessory component of the multisubunit proton-transporting vacuolar (V)-ATPase protein pump. Interacts (via N-terminus) with ATP6AP1 (via N-terminus). Interacts with ATP6V0D1; ATP6V0D1 is a V-ATPase complex subunit and the interaction promotes V-ATPase complex assembly. Interacts with TMEM9; TMEM9 is a V-ATPase assembly regulator and the interaction induces the interaction with ATP6V0D1. Interacts with VMA21 (via N-terminus); VMA21 is a V-ATPase accessory component. In terms of processing, phosphorylated. Post-translationally, proteolytically cleaved by a furin-like convertase in the trans-Golgi network to generate N- and C-terminal fragments. Expressed in glutamatergic and GABAergic neurons with highest levels in the cortex, the hippocampus, the medial habenular nucleus, the cerebellum, the medulla and the olfactory bulb (at protein level).

The protein localises to the endoplasmic reticulum membrane. It localises to the lysosome membrane. It is found in the cytoplasmic vesicle. The protein resides in the autophagosome membrane. Its subcellular location is the cell projection. The protein localises to the dendritic spine membrane. It localises to the axon. It is found in the endosome membrane. The protein resides in the clathrin-coated vesicle membrane. Its subcellular location is the secretory vesicle. The protein localises to the synaptic vesicle membrane. In terms of biological role, multifunctional protein which functions as a renin, prorenin cellular receptor and is involved in the assembly of the lysosomal proton-transporting V-type ATPase (V-ATPase) and the acidification of the endo-lysosomal system. May mediate renin-dependent cellular responses by activating ERK1 and ERK2. By increasing the catalytic efficiency of renin in AGT/angiotensinogen conversion to angiotensin I, may also play a role in the renin-angiotensin system (RAS). Through its function in V-type ATPase (v-ATPase) assembly and acidification of the lysosome it regulates protein degradation and may control different signaling pathways important for proper brain development, synapse morphology and synaptic transmission. The chain is Renin receptor from Mus musculus (Mouse).